Consider the following 311-residue polypeptide: Putative ankyrin repeat protein RF_0923 (311 aa).

ANK repeat units follow at residues 42 to 71 (IDNT…EQAI), 77 to 106 (NGNT…PQAI), 112 to 141 (NGNT…PQAI), 147 to 176 (NGNT…EQAI), and 182 to 213 (KGCT…AINH).

The chain is Putative ankyrin repeat protein RF_0923 from Rickettsia felis (strain ATCC VR-1525 / URRWXCal2) (Rickettsia azadi).